Consider the following 620-residue polypeptide: Chaperone protein HscA homolog (620 aa).

Belongs to the heat shock protein 70 family.

In terms of biological role, chaperone involved in the maturation of iron-sulfur cluster-containing proteins. Has a low intrinsic ATPase activity which is markedly stimulated by HscB. This chain is Chaperone protein HscA homolog, found in Pseudomonas fluorescens (strain SBW25).